Here is a 430-residue protein sequence, read N- to C-terminus: Asparagine--tRNA ligase (430 aa).

It belongs to the class-II aminoacyl-tRNA synthetase family. As to quaternary structure, homodimer.

Its subcellular location is the cytoplasm. It catalyses the reaction tRNA(Asn) + L-asparagine + ATP = L-asparaginyl-tRNA(Asn) + AMP + diphosphate + H(+). The sequence is that of Asparagine--tRNA ligase from Staphylococcus saprophyticus subsp. saprophyticus (strain ATCC 15305 / DSM 20229 / NCIMB 8711 / NCTC 7292 / S-41).